Consider the following 178-residue polypeptide: Aspartic proteinase nepenthesin-2 (178 aa).

Asp98 is an active-site residue.

It belongs to the peptidase A1 family.

Its subcellular location is the secreted. It catalyses the reaction Similar to pepsin, but also cleaves on either side of Asp and at Lys-|-Arg.. Inhibited by pepstatin and by diazoacetyl-D,L-norleucine methyl ester (DAN) in the presence of Cu(2+) ions. Functionally, extracellular proteinase found in the pitcher fluid of carnivorous plants. Digest prey for nitrogen uptake. This is Aspartic proteinase nepenthesin-2 from Nepenthes distillatoria (Pitcher plant).